A 135-amino-acid chain; its full sequence is Large ribosomal subunit protein eL27x (135 aa).

This sequence belongs to the eukaryotic ribosomal protein eL27 family.

In Arabidopsis thaliana (Mouse-ear cress), this protein is Large ribosomal subunit protein eL27x (RPL27C).